Here is a 412-residue protein sequence, read N- to C-terminus: Proteasome-activating nucleotidase 2 (412 aa).

Residues 28 to 74 (LRQHFERMVDVNRELDQRLQNADDRHAELVDEVDQMKARNEALKTAS) are a coiled coil. ATP-binding positions include 196-201 (GTGKTM) and histidine 335. The docks into pockets in the proteasome alpha-ring to cause gate opening stretch occupies residues 409–412 (DYQY).

It belongs to the AAA ATPase family. In terms of assembly, homohexamer. The hexameric complex has a two-ring architecture resembling a top hat that caps the 20S proteasome core at one or both ends. Upon ATP-binding, the C-terminus of PAN interacts with the alpha-rings of the proteasome core by binding to the intersubunit pockets.

The protein localises to the cytoplasm. ATPase which is responsible for recognizing, binding, unfolding and translocation of substrate proteins into the archaeal 20S proteasome core particle. Is essential for opening the gate of the 20S proteasome via an interaction with its C-terminus, thereby allowing substrate entry and access to the site of proteolysis. Thus, the C-termini of the proteasomal ATPase function like a 'key in a lock' to induce gate opening and therefore regulate proteolysis. Unfolding activity requires energy from ATP hydrolysis, whereas ATP binding alone promotes ATPase-20S proteasome association which triggers gate opening, and supports translocation of unfolded substrates. This chain is Proteasome-activating nucleotidase 2, found in Haloferax volcanii (strain ATCC 29605 / DSM 3757 / JCM 8879 / NBRC 14742 / NCIMB 2012 / VKM B-1768 / DS2) (Halobacterium volcanii).